Reading from the N-terminus, the 139-residue chain is ATP synthase epsilon chain, chloroplastic (139 aa).

The protein belongs to the ATPase epsilon chain family. In terms of assembly, F-type ATPases have 2 components, CF(1) - the catalytic core - and CF(0) - the membrane proton channel. CF(1) has five subunits: alpha(3), beta(3), gamma(1), delta(1), epsilon(1). CF(0) has three main subunits: a, b and c.

The protein resides in the plastid. It is found in the chloroplast thylakoid membrane. Its function is as follows. Produces ATP from ADP in the presence of a proton gradient across the membrane. The sequence is that of ATP synthase epsilon chain, chloroplastic from Welwitschia mirabilis (Tree tumbo).